A 201-amino-acid chain; its full sequence is MDIKACYQNAKALLEGHFLLSSGFHSNYYLQSAKVLEDPKLAEQLALELAKQIQEAHLNIECVCSPAIGGILAGYELARALGVRFIFTERVDNTMTLRRGFEVKKNEKILVCEDIITTGKSAMECAKVLEEKGAQIVAFGALANRGICKRTHSHLKAQEGACLPSHLPLFALEDFVFDMHKPSSCPLCATSVAIKPGSRGN.

E113–S121 lines the 5-phospho-alpha-D-ribose 1-diphosphate pocket. Positions 117 and 145 each coordinate orotate.

It belongs to the purine/pyrimidine phosphoribosyltransferase family. PyrE subfamily. Homodimer. The cofactor is Mg(2+).

It catalyses the reaction orotidine 5'-phosphate + diphosphate = orotate + 5-phospho-alpha-D-ribose 1-diphosphate. It functions in the pathway pyrimidine metabolism; UMP biosynthesis via de novo pathway; UMP from orotate: step 1/2. In terms of biological role, catalyzes the transfer of a ribosyl phosphate group from 5-phosphoribose 1-diphosphate to orotate, leading to the formation of orotidine monophosphate (OMP). In Helicobacter pylori (strain G27), this protein is Orotate phosphoribosyltransferase.